The primary structure comprises 209 residues: Ribonuclease HII (209 aa).

In terms of domain architecture, RNase H type-2 spans 20–209 (QLEIGIDEVG…KSFLTKLNLI (190 aa)). Residues aspartate 26, glutamate 27, and aspartate 122 each coordinate a divalent metal cation.

Belongs to the RNase HII family. It depends on Mn(2+) as a cofactor. Mg(2+) is required as a cofactor.

It localises to the cytoplasm. The catalysed reaction is Endonucleolytic cleavage to 5'-phosphomonoester.. Functionally, endonuclease that specifically degrades the RNA of RNA-DNA hybrids. This Prochlorococcus marinus (strain MIT 9515) protein is Ribonuclease HII.